The primary structure comprises 323 residues: Serine/threonine-protein phosphatase PP1-gamma catalytic subunit (323 aa).

Position 2 is an N-acetylalanine (Ala2). Asp64, His66, Asp92, and Asn124 together coordinate Mn(2+). Catalysis depends on His125, which acts as the Proton donor. Mn(2+) contacts are provided by His173 and His248. Residues Thr307 and Thr311 each carry the phosphothreonine modification.

The protein belongs to the PPP phosphatase family. PP-1 subfamily. PP1 comprises a catalytic subunit, PPP1CA, PPP1CB or PPP1CC, which is folded into its native form by inhibitor 2 and glycogen synthetase kinase 3, and then complexed to one or several targeting or regulatory subunits. PPP1R12A, PPP1R12B and PPP1R12C mediate binding to myosin. PPP1R3A (in skeletal muscle), PPP1R3B (in liver), PPP1R3C, PPP1R3D and PPP1R3F (in brain) mediate binding to glycogen. PPP1R15A and PPP1R15B mediate binding to EIF2S1. Part of a complex containing PPP1R15B, PP1 and NCK1/2. Interacts with PPP1R3B, PPP1R7 and CDCA2. Interacts with IKFZ1; the interaction targets PPP1CC to pericentromeric heterochromatin, dephosphorylates IKAROS, stabilizes it and prevents it from degradation. Interacts with NOM1 and PPP1R8. Component of the PTW/PP1 phosphatase complex, composed of PPP1R10/PNUTS, TOX4, WDR82, and PPP1CA or PPP1CB or PPP1CC. Interacts with PPP1R8. Interacts with NEK2. Interacts with PPP1R42; the interaction is direct. Interacts with URI1; the interaction is phosphorylation-dependent and occurs in a growth factor-dependent manner. Interacts with FOXP3. Interacts with TMEM225 (via RVxF motif). Interacts with MKI67. Interacts with RRP1B; this targets PPP1CC to the nucleolus. Interacts with DYNLT4. Interacts (via RVxF motif) with FIRRM; regulates PLK1 kinase activity. Interacts with the KNL1 complex subunit KNL1; the interaction is direct and mutually exclusive with KNL1 binding to microtubules. Component of the SHOC2-MRAS-PP1c (SMP) complex consisting of SHOC2, GTP-bound M-Ras/MRAS and the catalytic subunit of protein phosphatase 1 (either PPP1CA, PPP1CB or PPP1CC). SHOC2 and PP1c preferably bind M-Ras/MRAS, but they also bind K-Ras/KRAS, N-Ras/NRAS and H-Ras/HRAS; these interactions are GTP-dependent and both SHOC2 and PP1c are required to form a stable complex. Interacts with SHOC2 in the absence of Ras GTPases. The cofactor is Mn(2+). Post-translationally, phosphorylated by NEK2.

The protein localises to the cytoplasm. Its subcellular location is the nucleus. It localises to the cleavage furrow. It is found in the nucleolus. The protein resides in the nucleoplasm. The protein localises to the chromosome. Its subcellular location is the centromere. It localises to the kinetochore. It is found in the nucleus speckle. The protein resides in the midbody. The protein localises to the mitochondrion. Its subcellular location is the cytoskeleton. It localises to the microtubule organizing center. The catalysed reaction is O-phospho-L-seryl-[protein] + H2O = L-seryl-[protein] + phosphate. It catalyses the reaction O-phospho-L-threonyl-[protein] + H2O = L-threonyl-[protein] + phosphate. Inactivated by binding to URI1. Protein phosphatase that associates with over 200 regulatory proteins to form highly specific holoenzymes which dephosphorylate hundreds of biological targets. Protein phosphatase 1 (PP1) is essential for cell division, and participates in the regulation of glycogen metabolism, muscle contractility and protein synthesis. Dephosphorylates RPS6KB1. Involved in regulation of ionic conductances and long-term synaptic plasticity. May play an important role in dephosphorylating substrates such as the postsynaptic density-associated Ca(2+)/calmodulin dependent protein kinase II. Component of the PTW/PP1 phosphatase complex, which plays a role in the control of chromatin structure and cell cycle progression during the transition from mitosis into interphase. Regulates the recruitment of the SKA complex to kinetochores. Core component of the SHOC2-MRAS-PP1c (SMP) holophosphatase complex that regulates the MAPK pathway activation. Dephosphorylates MKI67 at the onset of anaphase. The SMP complex specifically dephosphorylates the inhibitory phosphorylation at 'Ser-259' of RAF1 kinase, 'Ser-365' of BRAF kinase and 'Ser-214' of ARAF kinase, stimulating their kinase activities. The SMP complex enhances the dephosphorylation activity and substrate specificity of PP1c. In Canis lupus familiaris (Dog), this protein is Serine/threonine-protein phosphatase PP1-gamma catalytic subunit (PPP1CC).